A 554-amino-acid polypeptide reads, in one-letter code: NADH-quinone oxidoreductase subunit N 3 (554 aa).

A run of 14 helical transmembrane segments spans residues 35–55 (LMPV…EAFV), 65–85 (LFLT…LAAG), 105–125 (PTLF…FTFA), 161–181 (GFTT…LLVF), 187–207 (LLTL…LCAV), 222–242 (YFLL…LLYG), 275–295 (ALLL…VGAV), 322–342 (VAAF…LAWD), 345–365 (PVMW…AITQ), 371–391 (LLAY…IAAS), 398–418 (VLFY…VVTL), 442–462 (VAAV…TSGF), 476–496 (GAGA…FFYI), and 525–545 (IAVG…FLDL).

Belongs to the complex I subunit 2 family. As to quaternary structure, NDH-1 is composed of 14 different subunits. Subunits NuoA, H, J, K, L, M, N constitute the membrane sector of the complex.

The protein localises to the cell membrane. It carries out the reaction a quinone + NADH + 5 H(+)(in) = a quinol + NAD(+) + 4 H(+)(out). In terms of biological role, NDH-1 shuttles electrons from NADH, via FMN and iron-sulfur (Fe-S) centers, to quinones in the respiratory chain. The immediate electron acceptor for the enzyme in this species is believed to be a menaquinone. Couples the redox reaction to proton translocation (for every two electrons transferred, four hydrogen ions are translocated across the cytoplasmic membrane), and thus conserves the redox energy in a proton gradient. In Streptomyces griseus subsp. griseus (strain JCM 4626 / CBS 651.72 / NBRC 13350 / KCC S-0626 / ISP 5235), this protein is NADH-quinone oxidoreductase subunit N 3.